The sequence spans 102 residues: RNA-binding protein Hfq (102 aa).

The region spanning 9–68 is the Sm domain; that stretch reads DPFLNALRRERVPVSIYLVNGIKLQGQIESFDQFVILLKNTVSQMVYKHAISTVVPSRPV. Residues 63–102 are disordered; the sequence is VPSRPVSHHSNNAGGGTSSNYHHGSSPQNTSAQQDSEETE. A compositionally biased stretch (polar residues) spans 70–96; the sequence is HHSNNAGGGTSSNYHHGSSPQNTSAQQ.

Belongs to the Hfq family. As to quaternary structure, homohexamer.

Functionally, RNA chaperone that binds small regulatory RNA (sRNAs) and mRNAs to facilitate mRNA translational regulation in response to envelope stress, environmental stress and changes in metabolite concentrations. Also binds with high specificity to tRNAs. The chain is RNA-binding protein Hfq from Shigella dysenteriae serotype 1 (strain Sd197).